The following is a 128-amino-acid chain: Small ribosomal subunit protein uS11 (128 aa).

This sequence belongs to the universal ribosomal protein uS11 family. In terms of assembly, part of the 30S ribosomal subunit. Interacts with proteins S7 and S18. Binds to IF-3.

Its function is as follows. Located on the platform of the 30S subunit, it bridges several disparate RNA helices of the 16S rRNA. Forms part of the Shine-Dalgarno cleft in the 70S ribosome. This chain is Small ribosomal subunit protein uS11, found in Synechococcus sp. (strain JA-3-3Ab) (Cyanobacteria bacterium Yellowstone A-Prime).